The following is a 206-amino-acid chain: Putative precorrin-2 dehydrogenase (206 aa).

Residues 20–21 (SV) and 41–46 (KEFDEE) each bind NAD(+).

It belongs to the precorrin-2 dehydrogenase / sirohydrochlorin ferrochelatase family. Homodimer.

It catalyses the reaction precorrin-2 + NAD(+) = sirohydrochlorin + NADH + 2 H(+). The protein operates within porphyrin-containing compound metabolism; siroheme biosynthesis; sirohydrochlorin from precorrin-2: step 1/1. Its function is as follows. Involved in the archaeal biosynthesis of heme. Catalyzes the oxiation of precorrin-2 into sirohydroclorin. This is Putative precorrin-2 dehydrogenase from Methanocaldococcus jannaschii (strain ATCC 43067 / DSM 2661 / JAL-1 / JCM 10045 / NBRC 100440) (Methanococcus jannaschii).